The following is a 697-amino-acid chain: Polyribonucleotide nucleotidyltransferase (697 aa).

Mg(2+)-binding residues include D484 and D490. Residues 551–610 (PRITTIWVKTDKIRDVIGSGGKNIRGITEATGVSIDIEDSGRINIASTSKEACDKAIKMI) form the KH domain. The S1 motif domain occupies 620–688 (GKLYMGTVKK…KQGKIKLSRK (69 aa)).

Belongs to the polyribonucleotide nucleotidyltransferase family. Requires Mg(2+) as cofactor.

Its subcellular location is the cytoplasm. It carries out the reaction RNA(n+1) + phosphate = RNA(n) + a ribonucleoside 5'-diphosphate. Its function is as follows. Involved in mRNA degradation. Catalyzes the phosphorolysis of single-stranded polyribonucleotides processively in the 3'- to 5'-direction. This Geobacter sulfurreducens (strain ATCC 51573 / DSM 12127 / PCA) protein is Polyribonucleotide nucleotidyltransferase.